The sequence spans 342 residues: Pre-mRNA-splicing factor 18 (342 aa).

Met1 is subject to N-acetylmethionine.

The protein belongs to the PRP18 family. As to quaternary structure, heterodimer with PPIH. Interacts with PRPF4 and with the spliceosome. Part of a complex containing U4/U6 snRNPs.

The protein resides in the nucleus speckle. Participates in the second step of pre-mRNA splicing. The sequence is that of Pre-mRNA-splicing factor 18 (Prpf18) from Mus musculus (Mouse).